The sequence spans 763 residues: Actin filament-associated protein 1-like 1 (763 aa).

The segment at 83-137 (LQDMPEDEAESCKAASPEPAKSPSLRHTADLPPPLPNRPPPEDYYEEALPLGPGK) is disordered. Serine 98, serine 104, and serine 153 each carry phosphoserine. Residues 169 to 210 (TRMNGELKNSYNDSDAMSSSYESYDEEEEEGKGPQPTHQWPS) are disordered. A compositionally biased stretch (polar residues) spans 175–185 (LKNSYNDSDAM). One can recognise a PH 1 domain in the interval 220–316 (DCRICAFLLR…WLKVIREVSK (97 aa)). Phosphoserine is present on residues serine 329 and serine 343. Positions 343-380 (SQEKQTSDSDSLGMGDSCSTLGREHGKGKKSSLSELKG) are disordered. A PH 2 domain is found at 413–507 (EVPCCGYLNV…WLGLLLVEMG (95 aa)). The residue at position 552 (tyrosine 552) is a Phosphotyrosine. The segment at 561-604 (QDEEPERPPGAQVKRHASTCSEKSHRVDPQVKVKRHASSAHQYK) is disordered. Basic and acidic residues predominate over residues 582–591 (EKSHRVDPQV). The stretch at 606–694 (GKNRAEEDAR…LVTVKERLQQ (89 aa)) forms a coiled coil. Positions 712 to 724 (SGETANKPQNNVP) are enriched in polar residues. The segment at 712–763 (SGETANKPQNNVPEQPLPVNCVSELRKRSPSIINSNQGRVLQKAKEWEMKKT) is disordered. Serine 742 bears the Phosphoserine mark. Residues 754-763 (KAKEWEMKKT) show a composition bias toward basic and acidic residues.

As to quaternary structure, interacts with CTTN.

It is found in the cytoplasm. The protein localises to the cell projection. Its subcellular location is the podosome. The protein resides in the invadopodium. It localises to the cytoskeleton. It is found in the stress fiber. In terms of biological role, may be involved in podosome and invadosome formation. The chain is Actin filament-associated protein 1-like 1 (AFAP1L1) from Bos taurus (Bovine).